The primary structure comprises 621 residues: 1-deoxy-D-xylulose-5-phosphate synthase (621 aa).

Thiamine diphosphate-binding positions include H80 and 121–123 (GHS). D152 serves as a coordination point for Mg(2+). Thiamine diphosphate contacts are provided by residues 153–154 (GA), N181, Y288, and E370. N181 contributes to the Mg(2+) binding site.

This sequence belongs to the transketolase family. DXPS subfamily. In terms of assembly, homodimer. Requires Mg(2+) as cofactor. Thiamine diphosphate is required as a cofactor.

It carries out the reaction D-glyceraldehyde 3-phosphate + pyruvate + H(+) = 1-deoxy-D-xylulose 5-phosphate + CO2. It functions in the pathway metabolic intermediate biosynthesis; 1-deoxy-D-xylulose 5-phosphate biosynthesis; 1-deoxy-D-xylulose 5-phosphate from D-glyceraldehyde 3-phosphate and pyruvate: step 1/1. Catalyzes the acyloin condensation reaction between C atoms 2 and 3 of pyruvate and glyceraldehyde 3-phosphate to yield 1-deoxy-D-xylulose-5-phosphate (DXP). The chain is 1-deoxy-D-xylulose-5-phosphate synthase from Serratia proteamaculans (strain 568).